The chain runs to 1221 residues: MLNGHVVNYGQHRTRRSFSRIKEILPLPNLTDVQTESYKWFLDEGVKEVFDDILPISDTSGRLTLEYVDYKLQEPKYTVDESRKHDATYSAPMHVTLKLTNHETGEIKTQDVFFGDLPLMTKSGSFIVNGAERVIVSQLVRSPGVYYSGEFDKNGRQIFGTTVIPNRGAWLEFETDAKNISYVRVDRTRKLPLSVLVRALGFGSDSEIKEIFGDSDTLDLTLDKDVHKNPADSRVAEALKDIYDRLRPGEPKTTDSSRSLLVSRFFDPRRYDLAAVGRYKVNKKLSLKNRLLGYTLAETLADPDTGEVLAAKGTVVNNEVMDVLKDYLDRDDFKTVTYTPSDEGVIPEPVTVQEIKVFSREIPDREIKLISNGHIAEDVKCITPADIIASVNYFLELQEGVGNIDDIDHLGNRRIRRVGELLQNQMRIGLARMERVVRERMSIQDAATVTPQQLINIRPIVGSIKEFFGSSQLSQFMDQNNPLGELTHKRRMSALGPGGLSRDRAGYEVRDVHYTHYGRLCPIETPEGPNIGLINSMATYAIINKYGFLETPYRRVSWATHKVTDKIDYLTADEEDNYIIAGANTPLNEDGSFVDDVILCRHREDNVEVSPDRIDYIDVIPKQVVSVTSACIPFLENDDSNRALMGANHQRQAVPLINPHGPLVATGMEYRAGHDSGDALLAEADGEVEYVDANEIRVRREDQTLDTYTLEKYRRSNATKNYNQTPNVKRGDKVVDGQVIANGPSMADGELALGQNPVIAFTTWNMYNFEDAIMLSERLVKEDVYTSIHIEDYDSEARDTKLGPEEITREIPNVGEDALKDLDENGIIRIGAEVHDGDILVGKVTPKGITELSAEERLLHAIFGEKAREVRDTSLRVPHGGGGVVQDVQVFTREAGDELAPGVNTLVRVYIVQKRKIQVGDKMSGRHGNKGTVALIAPVEDMPYLPDGTPVDICLNPMGVPSRMNIGQLLEIHLGRAARALGIHVATPVFDGASEDDVWDFVREAGVDSDGKTVLYDGRTGEPFHNRVSVGVMYYLKLTHMVDDKIHARSIGPYSLVTQQPLGGKAQFGGQRFGEMEVWALEAYGAAYTLQEILTYKSDDVVGRVKAYEAIVKGERITKPGVPESFRVLVKELQSLGLDLRVLDSDENEVELRDMDEDSNEHVNIDALSRLAEAQEKKKLAEEEAEIAAEAEAEGSAEEDAAEADADANEAETADDDKASK.

The segment at 1176-1221 (EKKKLAEEEAEIAAEAEAEGSAEEDAAEADADANEAETADDDKASK) is disordered. Acidic residues predominate over residues 1183–1215 (EEAEIAAEAEAEGSAEEDAAEADADANEAETAD).

It belongs to the RNA polymerase beta chain family. The RNAP catalytic core consists of 2 alpha, 1 beta, 1 beta' and 1 omega subunit. When a sigma factor is associated with the core the holoenzyme is formed, which can initiate transcription.

It catalyses the reaction RNA(n) + a ribonucleoside 5'-triphosphate = RNA(n+1) + diphosphate. Functionally, DNA-dependent RNA polymerase catalyzes the transcription of DNA into RNA using the four ribonucleoside triphosphates as substrates. In Lactobacillus delbrueckii subsp. bulgaricus (strain ATCC BAA-365 / Lb-18), this protein is DNA-directed RNA polymerase subunit beta.